A 757-amino-acid polypeptide reads, in one-letter code: Catalase-peroxidase 2 (757 aa).

The N-terminal stretch at 1–26 (MKHPLFNQKVLAGFVSMLLISGSAFA) is a signal peptide. Positions 126–248 (WHSAGTYRTL…LGATHMGLIY (123 aa)) form a cross-link, tryptophyl-tyrosyl-methioninium (Trp-Tyr) (with M-274). The active-site Proton acceptor is the His-127. The segment at residues 248 to 274 (YVNPEGPKGVPDPLGSAKNIRVAFERM) is a cross-link (tryptophyl-tyrosyl-methioninium (Tyr-Met) (with W-126)). His-289 is a binding site for heme b.

Belongs to the peroxidase family. Peroxidase/catalase subfamily. As to quaternary structure, homodimer or homotetramer. The cofactor is heme b. Post-translationally, formation of the three residue Trp-Tyr-Met cross-link is important for the catalase, but not the peroxidase activity of the enzyme.

The enzyme catalyses H2O2 + AH2 = A + 2 H2O. It catalyses the reaction 2 H2O2 = O2 + 2 H2O. Bifunctional enzyme with both catalase and broad-spectrum peroxidase activity. The protein is Catalase-peroxidase 2 of Shewanella frigidimarina (strain NCIMB 400).